The sequence spans 158 residues: Protein GLUTAMINE DUMPER 1 (158 aa).

Over 1–36 (MRPLSVQSKFEDVATSTSVNHHGVTPQSPWHSPVPY) the chain is Extracellular. Residues 37–57 (LFGGLAAMLGLIAFALLILAC) traverse the membrane as a helical segment. The Cytoplasmic portion of the chain corresponds to 58–158 (SYWRLSSSGE…DTGETTTTSH (101 aa)). Residues 65–85 (SGEEDGQNVDEEKESRSGDKA) form a disordered region. Acidic residues predominate over residues 66 to 76 (GEEDGQNVDEE). Positions 96-100 (VIMAG) match the VIMAG motif. A disordered region spans residues 126–158 (ISQEESVAKEEEKMREGEEEKVKDTGETTTTSH). The span at 131 to 151 (SVAKEEEKMREGEEEKVKDTG) shows a compositional bias: basic and acidic residues.

The protein belongs to the GLUTAMINE DUMPER 1 (TC 9.B.60) family. Interacts with LOG2. In terms of processing, ubiquitinated by LOG2 (in vitro). As to expression, expressed in the vascular tissues and in hydathodes. Expressed in the phloem and xylem (at the protein level).

The protein localises to the cell membrane. Probable subunit of an amino acid transporter involved in the regulation of the amino acid metabolism. Stimulates amino acid export by activating nonselective amino acid facilitators. Required the interaction with the RING-type E3 ubiquitin-protein ligase LOG2 to fulfill its function. Plays a role in the Gln export at hydathodes, at xylem parenchyma into xylem sap and from mesophyll into leaf apoplasm. Acts upstream genes involved in the salicylic acid (SA) pathway and in the geminivirus-host interaction. In Arabidopsis thaliana (Mouse-ear cress), this protein is Protein GLUTAMINE DUMPER 1 (GDU1).